Reading from the N-terminus, the 369-residue chain is Somatostatin receptor type 2 (369 aa).

Over 1-43 (MDMAYELLNGSQPWLSSPFDLNGSVATANSSNQTEPYYDLTSN) the chain is Extracellular. 4 N-linked (GlcNAc...) asparagine glycosylation sites follow: Asn-9, Asn-22, Asn-29, and Asn-32. The helical transmembrane segment at 44–67 (AVLTFIYFVVCIIGLCGNTLVIYV) threads the bilayer. The Cytoplasmic segment spans residues 68–78 (ILRYAKMKTIT). Residues 79 to 103 (NIYILNLAIADELFMLGLPFLAMQV) form a helical membrane-spanning segment. At 104–118 (ALVHWPFGKAICRVV) the chain is on the extracellular side. Cysteines 115 and 193 form a disulfide. Residues 119-138 (MTVDGINQFTSIFCLTVMSI) traverse the membrane as a helical segment. At 139-161 (DRYLAVVHPIKSAKWRRPRTAKM) the chain is on the cytoplasmic side. The chain crosses the membrane as a helical span at residues 162–181 (INVAVWGVSLLVILPIMIYA). Topologically, residues 182–207 (GLRSNQWGRSSCTINWPGESGAWYTG) are extracellular. A helical transmembrane segment spans residues 208–229 (FIIYAFILGFLVPLTIICLCYL). Residues 230 to 253 (FIIIKVKSSGIRVGSSKRKKSEKK) are Cytoplasmic-facing. Residues 254 to 278 (VTRMVSIVVAVFIFCWLPFYIFNVS) form a helical membrane-spanning segment. Residues 279-288 (SVSVAISPTP) lie on the Extracellular side of the membrane. The chain crosses the membrane as a helical span at residues 289–303 (ALKGMFDFVVVLTYA). Residues 304–369 (NSCANPILYA…LLNGDLQTSI (66 aa)) are Cytoplasmic-facing. Cys-328 carries the S-palmitoyl cysteine lipid modification. Ser-341, Ser-343, and Ser-348 each carry phosphoserine. Phosphothreonine occurs at positions 353 and 354.

The protein belongs to the G-protein coupled receptor 1 family. Homodimer and heterodimer with SSTR3 and SSTR5. Heterodimerization with SSTR3 inactivates SSTR3 receptor function. Heterodimerization with SSTR5 is enhanced by agonist stimulation of SSTR2 and increases SSTR2 cell growth inhibition activity. Following agonist stimulation, homodimers dissociate into monomers which is required for receptor internalization. Interacts with beta-arrestin; this interaction is necessary for receptor internalization and is destabilized by heterodimerization with SSTR5 which results in increased recycling of SSTR2 to the cell surface. Interacts (via C-terminus) with SHANK1 (via PDZ domain). Post-translationally, phosphorylated on serine and threonine residues in response to agonist stimulation, leading to receptor desensitization and rapid internalization. Phosphorylated to a greater extent on serine than threonine residues. Threonine phosphorylation is required for arrestin binding and receptor endocytosis but is not necessary for desensitization.

The protein resides in the cell membrane. Its subcellular location is the cytoplasm. In terms of biological role, receptor for somatostatin-14 and -28. This receptor is coupled via pertussis toxin sensitive G proteins to inhibition of adenylyl cyclase. In addition it stimulates phosphotyrosine phosphatase and PLC via pertussis toxin insensitive as well as sensitive G proteins. Inhibits calcium entry by suppressing voltage-dependent calcium channels. Acts as the functionally dominant somatostatin receptor in pancreatic alpha- and beta-cells where it mediates the inhibitory effect of somatostatin-14 on hormone secretion. Inhibits cell growth through enhancement of MAPK1 and MAPK2 phosphorylation and subsequent up-regulation of CDKN1B. Stimulates neuronal migration and axon outgrowth and may participate in neuron development and maturation during brain development. Mediates negative regulation of insulin receptor signaling through PTPN6. Inactivates SSTR3 receptor function following heterodimerization. The protein is Somatostatin receptor type 2 (SSTR2) of Sus scrofa (Pig).